A 370-amino-acid polypeptide reads, in one-letter code: Cap-specific mRNA (nucleoside-2'-O-)-methyltransferase 1 (370 aa).

Positions 87–294 (AFRNRAGHKL…ERYLVCIGFI (208 aa)) constitute a RrmJ-type SAM-dependent 2'-O-MTase domain. Gly-130 and Asp-207 together coordinate S-adenosyl-L-methionine. Lys-248 serves as the catalytic Proton acceptor.

As to quaternary structure, component of a complex composed of CBF5, GAR1, NHP2, MTR1, NOP10 and Tb11.01.8210.

It localises to the nucleus. It catalyses the reaction a 5'-end (N(7)-methyl 5'-triphosphoguanosine)-ribonucleoside in mRNA + S-adenosyl-L-methionine = a 5'-end (N(7)-methyl 5'-triphosphoguanosine)-(2'-O-methyl-ribonucleoside) in mRNA + S-adenosyl-L-homocysteine + H(+). In terms of biological role, S-adenosyl-L-methionine-dependent methyltransferase that mediates RNA cap1 2'-O-ribose methylation to the 5'-cap structure of spliced leader and U1 small nuclear RNAs. Methylates the ribose of the first nucleotide of a m(7)GpppG-capped RNA to produce m(7)GpppNmp (cap1). Cap1 modification is linked to higher levels of translation. Recognizes a guanosine cap on RNA independent of its N(7) methylation status. In Trypanosoma brucei brucei (strain 927/4 GUTat10.1), this protein is Cap-specific mRNA (nucleoside-2'-O-)-methyltransferase 1 (MTR1).